A 268-amino-acid chain; its full sequence is Thiazole synthase (268 aa).

Residue Lys111 is the Schiff-base intermediate with DXP of the active site. 1-deoxy-D-xylulose 5-phosphate-binding positions include Gly172, 198 to 199 (AG), and 220 to 221 (NT).

It belongs to the ThiG family. As to quaternary structure, homotetramer. Forms heterodimers with either ThiH or ThiS.

It is found in the cytoplasm. The catalysed reaction is [ThiS sulfur-carrier protein]-C-terminal-Gly-aminoethanethioate + 2-iminoacetate + 1-deoxy-D-xylulose 5-phosphate = [ThiS sulfur-carrier protein]-C-terminal Gly-Gly + 2-[(2R,5Z)-2-carboxy-4-methylthiazol-5(2H)-ylidene]ethyl phosphate + 2 H2O + H(+). Its pathway is cofactor biosynthesis; thiamine diphosphate biosynthesis. Its function is as follows. Catalyzes the rearrangement of 1-deoxy-D-xylulose 5-phosphate (DXP) to produce the thiazole phosphate moiety of thiamine. Sulfur is provided by the thiocarboxylate moiety of the carrier protein ThiS. In vitro, sulfur can be provided by H(2)S. The protein is Thiazole synthase of Caulobacter sp. (strain K31).